A 587-amino-acid chain; its full sequence is Putative ankyrin repeat protein L66 (587 aa).

16 ANK repeats span residues 77–106 (DKNL…DIRI), 108–136 (NNYP…DVSD), 137–166 (YDNY…DVHC), 168–196 (DNAP…DVNY), 199–228 (NEDL…NIHF), 230–256 (DSLI…ILGN), 259–288 (NIRN…SIEN), 302–331 (FKKN…NVAF), 333–360 (DNLP…NVKI), 361–390 (NYEN…NVKD), 392–418 (TAIY…DLIK), 420–448 (HNEI…INKS), 449–478 (IYDK…DIKS), 480–507 (KFHD…KINN), 509–537 (YKNL…NMKC), and 539–567 (RIDT…KLIC).

This chain is Putative ankyrin repeat protein L66, found in Acanthamoeba polyphaga mimivirus (APMV).